A 145-amino-acid chain; its full sequence is 3-hydroxyacyl-[acyl-carrier-protein] dehydratase FabZ (145 aa).

H49 is an active-site residue.

This sequence belongs to the thioester dehydratase family. FabZ subfamily.

It is found in the cytoplasm. The enzyme catalyses a (3R)-hydroxyacyl-[ACP] = a (2E)-enoyl-[ACP] + H2O. Functionally, involved in unsaturated fatty acids biosynthesis. Catalyzes the dehydration of short chain beta-hydroxyacyl-ACPs and long chain saturated and unsaturated beta-hydroxyacyl-ACPs. This is 3-hydroxyacyl-[acyl-carrier-protein] dehydratase FabZ from Ehrlichia ruminantium (strain Gardel).